A 492-amino-acid chain; its full sequence is MHKTSEQTLIFEISKAGRVAYSLPLPTVDEVAAEELLPAHLLRQEDVELPEVSELDLVRHYTALSNRNHGVDSGFYPLGSCTMKYNPKINEDMARLPGFAHIHPLQPVESVQGALGLMYDLQEKLAVITGMDEVTLQPAAGAHGEWTGLMLIKAYHHARGDFKRTKVLVPDSAHGTNPASASVAGFDTVTVLSDERGLVDLADLKSKVGEDTAALMLTNPNTLGLFESDIVEIAKAVHEAGGKLYYDGANSNAIMGIARPGDMGFDVVHLNLHKTFTGPHGGGGPGSGPVGVKKDLIPYLPKPIVAKTAEGFVLDYDRPESIGRVKPFYGNFGINVRAYSYIRTMGGAGLARVSKEAVLNANYMLARLKGAYDAPYDVYCKHEFVLSGRRQKALGVRTLDIAKRLLDFGYHPPTIYFPLNVEECIMIEPTETESKETLDDFCDAMLQIAKEVEETPDVVLNAPHTTVVKRMDETLAARKPILRYQPKQEVHV.

Lys274 is modified (N6-(pyridoxal phosphate)lysine).

This sequence belongs to the GcvP family. C-terminal subunit subfamily. In terms of assembly, the glycine cleavage system is composed of four proteins: P, T, L and H. In this organism, the P 'protein' is a heterodimer of two subunits. Pyridoxal 5'-phosphate serves as cofactor.

The enzyme catalyses N(6)-[(R)-lipoyl]-L-lysyl-[glycine-cleavage complex H protein] + glycine + H(+) = N(6)-[(R)-S(8)-aminomethyldihydrolipoyl]-L-lysyl-[glycine-cleavage complex H protein] + CO2. Functionally, the glycine cleavage system catalyzes the degradation of glycine. The P protein binds the alpha-amino group of glycine through its pyridoxal phosphate cofactor; CO(2) is released and the remaining methylamine moiety is then transferred to the lipoamide cofactor of the H protein. In Exiguobacterium sibiricum (strain DSM 17290 / CCUG 55495 / CIP 109462 / JCM 13490 / 255-15), this protein is Probable glycine dehydrogenase (decarboxylating) subunit 2.